We begin with the raw amino-acid sequence, 160 residues long: 2-C-methyl-D-erythritol 2,4-cyclodiphosphate synthase (160 aa).

A divalent metal cation contacts are provided by D10 and H12. Residues 10–12 (DVH) and 36–37 (HS) each bind 4-CDP-2-C-methyl-D-erythritol 2-phosphate. A divalent metal cation is bound at residue H44. 4-CDP-2-C-methyl-D-erythritol 2-phosphate-binding positions include 58-60 (DIG), 63-67 (FPDTD), and R144.

Belongs to the IspF family. As to quaternary structure, homotrimer. A divalent metal cation is required as a cofactor.

The enzyme catalyses 4-CDP-2-C-methyl-D-erythritol 2-phosphate = 2-C-methyl-D-erythritol 2,4-cyclic diphosphate + CMP. It functions in the pathway isoprenoid biosynthesis; isopentenyl diphosphate biosynthesis via DXP pathway; isopentenyl diphosphate from 1-deoxy-D-xylulose 5-phosphate: step 4/6. In terms of biological role, involved in the biosynthesis of isopentenyl diphosphate (IPP) and dimethylallyl diphosphate (DMAPP), two major building blocks of isoprenoid compounds. Catalyzes the conversion of 4-diphosphocytidyl-2-C-methyl-D-erythritol 2-phosphate (CDP-ME2P) to 2-C-methyl-D-erythritol 2,4-cyclodiphosphate (ME-CPP) with a corresponding release of cytidine 5-monophosphate (CMP). In Dechloromonas aromatica (strain RCB), this protein is 2-C-methyl-D-erythritol 2,4-cyclodiphosphate synthase.